A 24-amino-acid chain; its full sequence is AQTPVKVTVTGAAGQIGYALLFRI.

Position 11–17 (11–17 (GAAGQIG)) interacts with NAD(+).

This sequence belongs to the LDH/MDH superfamily. MDH type 2 family.

It carries out the reaction (S)-malate + NAD(+) = oxaloacetate + NADH + H(+). In terms of biological role, catalyzes the reversible oxidation of malate to oxaloacetate. In Planomonospora venezuelensis, this protein is Malate dehydrogenase (mdh).